Consider the following 144-residue polypeptide: 3-hydroxyacyl-[acyl-carrier-protein] dehydratase FabZ (144 aa).

Histidine 47 is a catalytic residue.

The protein belongs to the thioester dehydratase family. FabZ subfamily.

It is found in the cytoplasm. The catalysed reaction is a (3R)-hydroxyacyl-[ACP] = a (2E)-enoyl-[ACP] + H2O. Functionally, involved in unsaturated fatty acids biosynthesis. Catalyzes the dehydration of short chain beta-hydroxyacyl-ACPs and long chain saturated and unsaturated beta-hydroxyacyl-ACPs. This chain is 3-hydroxyacyl-[acyl-carrier-protein] dehydratase FabZ, found in Dechloromonas aromatica (strain RCB).